The sequence spans 109 residues: Nucleoid-associated protein VV2410 (109 aa).

The segment at 1 to 22 (MFGKGGMGNLMKQAQQMQERMQ) is disordered.

It belongs to the YbaB/EbfC family. Homodimer.

The protein localises to the cytoplasm. The protein resides in the nucleoid. Functionally, binds to DNA and alters its conformation. May be involved in regulation of gene expression, nucleoid organization and DNA protection. In Vibrio vulnificus (strain YJ016), this protein is Nucleoid-associated protein VV2410.